Reading from the N-terminus, the 451-residue chain is Medium-chain fatty acid ethyl ester synthase/esterase 2 (451 aa).

Residue Lys114 forms a Glycyl lysine isopeptide (Lys-Gly) (interchain with G-Cter in ubiquitin) linkage. Residues 166–430 form the AB hydrolase-1 domain; the sequence is PLVVILHGLA…GGHLAYLDKD (265 aa). Residues Ser247, Asp395, and His423 each act as charge relay system in the active site.

This sequence belongs to the AB hydrolase superfamily. AB hydrolase 4 family.

The catalysed reaction is an aliphatic alcohol + acetyl-CoA = an acetyl ester + CoA. Its function is as follows. Displays enzymatic activity both for medium-chain fatty acid (MCFA) ethyl ester synthesis and hydrolysis (esterase activity). MCFA are toxic for yeast and this enzyme could thus be involved in their detoxification by esterification. This is Medium-chain fatty acid ethyl ester synthase/esterase 2 (EHT1) from Saccharomyces cerevisiae (strain ATCC 204508 / S288c) (Baker's yeast).